The following is a 620-amino-acid chain: Glutathione-regulated potassium-efflux system protein KefC (620 aa).

Helical transmembrane passes span 4–24 (HTLIQALIYLGSAALIVPIAV), 26–46 (LGLGSVLGYLIAGCIIGPWGL), 54–74 (SILHFAEIGVVLMLFIIGLEL), 90–110 (GALQMVICGGLLGLFCMLLGL), 114–134 (VAELIGMTLALSSTAIAMQAM), 149–169 (FAVLLFQDIAAIPLVAMIPLL), 178–198 (MGAFALSALKVAGALVLVVLL), 218–238 (VFSAVALFLVFGFGLLLEEVG), 270–290 (GLLLGLFFIGVGMSIDFGTLI), 294–314 (LRIVILLLGFLIIKIAMLWLI), 327–347 (WFAVLLGQGSEFAFVVFGAAQ), and 359–379 (SLTLAVALSMAATPILLVILN). The 120-residue stretch at 399–518 (QPRVIIAGFG…AGVEKPERET (120 aa)) folds into the RCK N-terminal domain. The segment at 597 to 620 (GWQGTEEGKHTGNMADEPETKPSS) is disordered.

It belongs to the monovalent cation:proton antiporter 2 (CPA2) transporter (TC 2.A.37) family. KefC subfamily. In terms of assembly, homodimer. Interacts with the regulatory subunit KefF.

It localises to the cell inner membrane. Its function is as follows. Pore-forming subunit of a potassium efflux system that confers protection against electrophiles. Catalyzes K(+)/H(+) antiport. The chain is Glutathione-regulated potassium-efflux system protein KefC from Escherichia coli O17:K52:H18 (strain UMN026 / ExPEC).